Here is a 298-residue protein sequence, read N- to C-terminus: Glutamyl-Q tRNA(Asp) synthetase (298 aa).

Residues 12–16 and glutamate 48 each bind L-glutamate; that span reads RFAPT. The 'HIGH' region motif lies at 15 to 25; it reads PTPSGYLHFGS. 4 residues coordinate Zn(2+): cysteine 104, cysteine 106, tyrosine 118, and cysteine 122. Residues tyrosine 175 and arginine 193 each coordinate L-glutamate. A 'KMSKS' region motif is present at residues 231–235; the sequence is KLGKS. Lysine 234 provides a ligand contact to ATP.

Belongs to the class-I aminoacyl-tRNA synthetase family. GluQ subfamily. Zn(2+) serves as cofactor.

Functionally, catalyzes the tRNA-independent activation of glutamate in presence of ATP and the subsequent transfer of glutamate onto a tRNA(Asp). Glutamate is transferred on the 2-amino-5-(4,5-dihydroxy-2-cyclopenten-1-yl) moiety of the queuosine in the wobble position of the QUC anticodon. The sequence is that of Glutamyl-Q tRNA(Asp) synthetase from Pseudomonas fluorescens (strain ATCC BAA-477 / NRRL B-23932 / Pf-5).